The primary structure comprises 505 residues: RNA-splicing ligase RtcB homolog (505 aa).

Aspartate 119, cysteine 122, histidine 227, and histidine 259 together coordinate Mn(2+). Asparagine 226–glutamate 230 contacts GMP. Serine 300 carries the phosphoserine modification. Histidine 353 lines the Mn(2+) pocket. GMP-binding positions include histidine 353 to asparagine 354, glycine 402 to methionine 405, serine 409, and histidine 428 to glycine 431. Residue histidine 428 is the GMP-histidine intermediate of the active site. Lysine 496 participates in a covalent cross-link: Glycyl lysine isopeptide (Lys-Gly) (interchain with G-Cter in SUMO2). A GMP-binding site is contributed by lysine 504.

Belongs to the RtcB family. Catalytic component of the tRNA-splicing ligase complex. Mn(2+) is required as a cofactor.

It is found in the nucleus. Its subcellular location is the cytoplasm. The enzyme catalyses a 3'-end 3'-phospho-ribonucleotide-RNA + a 5'-end dephospho-ribonucleoside-RNA + GTP = a ribonucleotidyl-ribonucleotide-RNA + GMP + diphosphate. It catalyses the reaction a 3'-end 2',3'-cyclophospho-ribonucleotide-RNA + a 5'-end dephospho-ribonucleoside-RNA + GTP + H2O = a ribonucleotidyl-ribonucleotide-RNA + GMP + diphosphate + H(+). Catalytic subunit of the tRNA-splicing ligase complex that acts by directly joining spliced tRNA halves to mature-sized tRNAs by incorporating the precursor-derived splice junction phosphate into the mature tRNA as a canonical 3',5'-phosphodiester. May act as an RNA ligase with broad substrate specificity, and may function toward other RNAs. The chain is RNA-splicing ligase RtcB homolog from Bos taurus (Bovine).